We begin with the raw amino-acid sequence, 657 residues long: ABC1 family protein YPL109C, mitochondrial (657 aa).

The N-terminal 15 residues, 1-15 (MSFLKFAYRNSWRYY), are a transit peptide targeting the mitochondrion.

This sequence belongs to the protein kinase superfamily. ADCK protein kinase family.

It is found in the mitochondrion. The sequence is that of ABC1 family protein YPL109C, mitochondrial from Saccharomyces cerevisiae (strain ATCC 204508 / S288c) (Baker's yeast).